Consider the following 299-residue polypeptide: Homoserine O-acetyltransferase (299 aa).

The active-site Acyl-thioester intermediate is cysteine 142. Substrate-binding residues include lysine 163 and serine 192. The active-site Proton acceptor is the histidine 235. Residue glutamate 237 is part of the active site. Arginine 249 is a binding site for substrate.

The protein belongs to the MetA family.

Its subcellular location is the cytoplasm. It carries out the reaction L-homoserine + acetyl-CoA = O-acetyl-L-homoserine + CoA. The protein operates within amino-acid biosynthesis; L-methionine biosynthesis via de novo pathway; O-acetyl-L-homoserine from L-homoserine: step 1/1. In terms of biological role, transfers an acetyl group from acetyl-CoA to L-homoserine, forming acetyl-L-homoserine. The chain is Homoserine O-acetyltransferase from Synechococcus sp. (strain ATCC 27144 / PCC 6301 / SAUG 1402/1) (Anacystis nidulans).